The sequence spans 206 residues: Xanthine phosphoribosyltransferase (206 aa).

Xanthine contacts are provided by Leu28 and Asn35. Position 136 to 140 (Ala136 to Ala140) interacts with 5-phospho-alpha-D-ribose 1-diphosphate. Lys164 provides a ligand contact to xanthine.

It belongs to the purine/pyrimidine phosphoribosyltransferase family. Xpt subfamily. Homodimer.

It is found in the cytoplasm. The catalysed reaction is XMP + diphosphate = xanthine + 5-phospho-alpha-D-ribose 1-diphosphate. It functions in the pathway purine metabolism; XMP biosynthesis via salvage pathway; XMP from xanthine: step 1/1. Its function is as follows. Converts the preformed base xanthine, a product of nucleic acid breakdown, to xanthosine 5'-monophosphate (XMP), so it can be reused for RNA or DNA synthesis. This is Xanthine phosphoribosyltransferase from Oenococcus oeni (strain ATCC BAA-331 / PSU-1).